A 265-amino-acid chain; its full sequence is Transcriptional activator TAF-1 (265 aa).

Disordered stretches follow at residues 1-133 and 167-218; these read AHGG…SEKA and THLK…KQAE. Residues 35–46 show a composition bias toward low complexity; it reads ASLSLDASAKSS. 2 stretches are compositionally biased toward basic and acidic residues: residues 103-115 and 191-209; these read RETT…DSKS and NERE…ESAR. One can recognise a bZIP domain in the interval 194–257; that stretch reads ELKREKRKQS…EKLKLENAAL (64 aa). Positions 196–215 are basic motif; the sequence is KREKRKQSNRESARRSRLRK. Residues 222-257 are leucine-zipper; the sequence is LAIRVQSLTAENMTLKSEINKLMENSEKLKLENAAL.

The protein belongs to the bZIP family. As to expression, present mainly in roots. Barely detectable in stems and leaves.

It localises to the nucleus. Trans-activator of a beta-glucuronidase (GUS) reporter gene. Binds to a G-box-related element, (5'-GCAACGTGGC-3'). Also binds to the HEX-motif of wheat histone H3 promoter. The chain is Transcriptional activator TAF-1 (TAF1) from Nicotiana tabacum (Common tobacco).